Consider the following 411-residue polypeptide: Na(+)-translocating NADH-quinone reductase subunit F (411 aa).

The chain crosses the membrane as a helical span at residues 6–26 (AIGGVAMFTLIIMSFVAIILA). A 2Fe-2S ferredoxin-type domain is found at 35 to 129 (GDVTIHINDN…DMKIEIDPEF (95 aa)). [2Fe-2S] cluster-binding residues include Cys-72, Cys-78, Cys-81, and Cys-113. The region spanning 132–273 (VQKWECEVIS…SGPYGEFFAK (142 aa)) is the FAD-binding FR-type domain.

Belongs to the NqrF family. Composed of six subunits; NqrA, NqrB, NqrC, NqrD, NqrE and NqrF. Requires [2Fe-2S] cluster as cofactor. It depends on FAD as a cofactor.

Its subcellular location is the cell inner membrane. It carries out the reaction a ubiquinone + n Na(+)(in) + NADH + H(+) = a ubiquinol + n Na(+)(out) + NAD(+). Functionally, NQR complex catalyzes the reduction of ubiquinone-1 to ubiquinol by two successive reactions, coupled with the transport of Na(+) ions from the cytoplasm to the periplasm. The first step is catalyzed by NqrF, which accepts electrons from NADH and reduces ubiquinone-1 to ubisemiquinone by a one-electron transfer pathway. The polypeptide is Na(+)-translocating NADH-quinone reductase subunit F (Psychrobacter arcticus (strain DSM 17307 / VKM B-2377 / 273-4)).